The chain runs to 103 residues: uncharacterized protein (103 aa).

The disordered stretch occupies residues 69-103 (SSISYPGGGGGGGGSAKSLSSSKPGGGGGSPLIFL). Composition is skewed to gly residues over residues 74–83 (PGGGGGGGGS) and 92–103 (PGGGGGSPLIFL).

This is an uncharacterized protein from Saccharomyces cerevisiae (strain ATCC 204508 / S288c) (Baker's yeast).